We begin with the raw amino-acid sequence, 184 residues long: Trypsin/chymotrypsin inhibitor (184 aa).

Intrachain disulfides connect Cys39–Cys84 and Cys136–Cys147.

This sequence belongs to the protease inhibitor I3 (leguminous Kunitz-type inhibitor) family. In terms of assembly, homodimer.

Its function is as follows. Inhibits trypsin and alpha-chymotrypsin. This is Trypsin/chymotrypsin inhibitor from Alocasia macrorrhizos (Giant taro).